Consider the following 87-residue polypeptide: Phosphoribosyl-ATP pyrophosphatase (87 aa).

The protein belongs to the PRA-PH family.

Its subcellular location is the cytoplasm. The catalysed reaction is 1-(5-phospho-beta-D-ribosyl)-ATP + H2O = 1-(5-phospho-beta-D-ribosyl)-5'-AMP + diphosphate + H(+). Its pathway is amino-acid biosynthesis; L-histidine biosynthesis; L-histidine from 5-phospho-alpha-D-ribose 1-diphosphate: step 2/9. This chain is Phosphoribosyl-ATP pyrophosphatase, found in Thermobifida fusca (strain YX).